Here is a 60-residue protein sequence, read N- to C-terminus: Large ribosomal subunit protein bL32 (60 aa).

This sequence belongs to the bacterial ribosomal protein bL32 family.

In Borrelia hermsii (strain HS1 / DAH), this protein is Large ribosomal subunit protein bL32.